The sequence spans 222 residues: Eukaryotic translation initiation factor 3 subunit K (222 aa).

Positions 46–208 (YDLEANLAVL…KIKTKNITEK (163 aa)) constitute a PCI domain.

This sequence belongs to the eIF-3 subunit K family. Component of the eukaryotic translation initiation factor 3 (eIF-3) complex. The eIF-3 complex interacts with pix.

Its subcellular location is the cytoplasm. In terms of biological role, component of the eukaryotic translation initiation factor 3 (eIF-3) complex, which is involved in protein synthesis of a specialized repertoire of mRNAs and, together with other initiation factors, stimulates binding of mRNA and methionyl-tRNAi to the 40S ribosome. The eIF-3 complex specifically targets and initiates translation of a subset of mRNAs involved in cell proliferation. In Drosophila virilis (Fruit fly), this protein is Eukaryotic translation initiation factor 3 subunit K.